Reading from the N-terminus, the 1033-residue chain is MRDLKEYDYSALLLNLTTSSLNKAQRRWRFAYAAIYSMRAMLSLVKEIVPARIDPKTSDASLSLSYTALESGEGAKINSMPLSYVPAIDQEQLVEIMKGKDLPGIQALGGVEGVAASLRTNPTKGIHGNEQEVSRRRDLFGSNTYHKPPPKGLLFFVYEAFKDLTILILLVCAIFSLGFGIKEHGIKEGWYEGGSIFVAVFLVIVVSALSNFRQERQFDKLSKISNNIKVEVLRDSRRQHISIFDVVVGDVVFLKIGDQIPADGLFLEGHSLQVDESSMTGESDHLEVDHKDNPFLFSGTKIVDGFAQMLVVSVGMSTTWGQTMSSINQDSSERTPLQVRLDTLTSTIGKIGLTVAALVLVVLLVRYFTGNTEKEGKREYNGSKTPVDTVVNSVVRIVAAAVTIVVVAIPEGLPLAVTLTLAYSMKRMMSDQAMVRKLSACETMGSATVICTDKTGTLTLNEMKVTKFWLGQESIHEDSTKMISPDVLDLLYQGTGLNTTGSVCVSDSGSTPEFSGSPTEKALLSWTVLNLGMDMESVKQKHEVLRVETFSSAKKRSGVLVRRKSDNTVHVHWKGAAEMVLAMCSHYYTSTGSVDLMDSTAKSRIQAIIQGMAASSLRCIAFAHKIASNDSVLEEDGLTLMGIVGLKDPCRPGVSKAVETCKLAGVTIKMITGDNVFTAKAIAFECGILDHNDKDEEDAVVEGVQFRNYTDEERMQKVDKIRVMARSSPSDKLLMVKCLRLKGHVVAVTGDGTNDAPALKEADIGLSMGIQGTEVAKESSDIVILDDNFASVATVLKWGRCVYNNIQKFIQFQLTVNVAALVINFIAAISAGEVPLTAVQLLWVNLIMDTLGALALATERPTNELLKRKPVGRTEALITNVMWRNLLVQSLYQIAVLLILQFKGMSIFSVRKEVKDTLIFNTFVLCQVFNEFNAREMEKKNVFKGLHRNRLFIGIIAITIVLQVIMVEFLKKFADTVRLNGWQWGTCIALASLSWPIGFFTKFIPVSETPFLSYFKNPRSLFKGSRSPSLKKP.

Met-1 carries the N-acetylmethionine modification. At 1–152 (MRDLKEYDYS…NTYHKPPPKG (152 aa)) the chain is on the cytoplasmic side. Residues 25–36 (QRRWRFAYAAIY) are interaction with calmodulin. Position 37 is a phosphoserine (Ser-37). A helical transmembrane segment spans residues 153–173 (LLFFVYEAFKDLTILILLVCA). The Lumenal portion of the chain corresponds to 174-191 (IFSLGFGIKEHGIKEGWY). The chain crosses the membrane as a helical span at residues 192-212 (EGGSIFVAVFLVIVVSALSNF). The Cytoplasmic portion of the chain corresponds to 213–341 (RQERQFDKLS…SERTPLQVRL (129 aa)). Residues 342–361 (DTLTSTIGKIGLTVAALVLV) traverse the membrane as a helical segment. At 362 to 397 (VLLVRYFTGNTEKEGKREYNGSKTPVDTVVNSVVRI) the chain is on the lumenal side. A helical membrane pass occupies residues 398–415 (VAAAVTIVVVAIPEGLPL). Residues 416–806 (AVTLTLAYSM…KWGRCVYNNI (391 aa)) are Cytoplasmic-facing. Asp-453 acts as the 4-aspartylphosphate intermediate in catalysis. Residues Asp-751 and Asp-755 each coordinate Mg(2+). Residues 807 to 825 (QKFIQFQLTVNVAALVINF) form a helical membrane-spanning segment. Topologically, residues 826-836 (IAAISAGEVPL) are lumenal. A helical transmembrane segment spans residues 837-857 (TAVQLLWVNLIMDTLGALALA). The Cytoplasmic portion of the chain corresponds to 858-877 (TERPTNELLKRKPVGRTEAL). Residues 878–900 (ITNVMWRNLLVQSLYQIAVLLIL) form a helical membrane-spanning segment. Topologically, residues 901–909 (QFKGMSIFS) are lumenal. Residues 910-930 (VRKEVKDTLIFNTFVLCQVFN) form a helical membrane-spanning segment. At 931 to 948 (EFNAREMEKKNVFKGLHR) the chain is on the cytoplasmic side. Residues 949-970 (NRLFIGIIAITIVLQVIMVEFL) traverse the membrane as a helical segment. Over 971 to 980 (KKFADTVRLN) the chain is Lumenal. The chain crosses the membrane as a helical span at residues 981 to 1002 (GWQWGTCIALASLSWPIGFFTK). Over 1003–1006 (FIPV) the chain is Cytoplasmic.

This sequence belongs to the cation transport ATPase (P-type) (TC 3.A.3) family. Type IIB subfamily.

The protein resides in the membrane. The catalysed reaction is Ca(2+)(in) + ATP + H2O = Ca(2+)(out) + ADP + phosphate + H(+). Its activity is regulated as follows. Activated by calmodulin. Functionally, this magnesium-dependent enzyme catalyzes the hydrolysis of ATP coupled with the translocation of calcium from the cytosol out of the cell or into organelles. The sequence is that of Calcium-transporting ATPase 12, plasma membrane-type (ACA12) from Arabidopsis thaliana (Mouse-ear cress).